A 385-amino-acid polypeptide reads, in one-letter code: S-adenosylmethionine synthase (385 aa).

Histidine 16 lines the ATP pocket. A Mg(2+)-binding site is contributed by aspartate 18. Glutamate 44 serves as a coordination point for K(+). 2 residues coordinate L-methionine: glutamate 57 and glutamine 100. Positions 100 to 110 are flexible loop; it reads QSPDINQGVDR. ATP-binding positions include 164 to 166, 230 to 231, aspartate 239, 245 to 246, alanine 262, and lysine 266; these read DGK, KF, and RK. Residue aspartate 239 participates in L-methionine binding. Lysine 270 is an L-methionine binding site.

Belongs to the AdoMet synthase family. As to quaternary structure, homotetramer; dimer of dimers. Mg(2+) serves as cofactor. It depends on K(+) as a cofactor.

The protein resides in the cytoplasm. It catalyses the reaction L-methionine + ATP + H2O = S-adenosyl-L-methionine + phosphate + diphosphate. It functions in the pathway amino-acid biosynthesis; S-adenosyl-L-methionine biosynthesis; S-adenosyl-L-methionine from L-methionine: step 1/1. Catalyzes the formation of S-adenosylmethionine (AdoMet) from methionine and ATP. The overall synthetic reaction is composed of two sequential steps, AdoMet formation and the subsequent tripolyphosphate hydrolysis which occurs prior to release of AdoMet from the enzyme. This Helicobacter pylori (strain G27) protein is S-adenosylmethionine synthase.